Here is a 320-residue protein sequence, read N- to C-terminus: Sucrose operon repressor (320 aa).

In terms of domain architecture, HTH lacI-type spans 1–55 (MKNIADIAKIAGVSKSTVSRYLNNGSVSLKTQQKLDEIIRENDYQPNQFAQSLRA). The H-T-H motif DNA-binding region spans 4 to 23 (IADIAKIAGVSKSTVSRYLN).

Its function is as follows. Negative regulator of scrB expression. This chain is Sucrose operon repressor (scrR), found in Staphylococcus xylosus.